Reading from the N-terminus, the 465-residue chain is Cysteine--tRNA ligase (465 aa).

Cysteine 27 contributes to the Zn(2+) binding site. A 'HIGH' region motif is present at residues 29 to 39 (PTVYNFFHIGN). Cysteine 207, histidine 232, and glutamate 236 together coordinate Zn(2+). Residues 264–268 (KMSKS) carry the 'KMSKS' region motif. Position 267 (lysine 267) interacts with ATP.

Belongs to the class-I aminoacyl-tRNA synthetase family. In terms of assembly, monomer. It depends on Zn(2+) as a cofactor.

Its subcellular location is the cytoplasm. The catalysed reaction is tRNA(Cys) + L-cysteine + ATP = L-cysteinyl-tRNA(Cys) + AMP + diphosphate. The polypeptide is Cysteine--tRNA ligase (Clostridium botulinum (strain 657 / Type Ba4)).